Reading from the N-terminus, the 193-residue chain is ECF RNA polymerase sigma factor SigK (193 aa).

Residues 35–101 (LYDRTRSRVY…RRAVDRVRSE (67 aa)) form a sigma-70 factor domain-2 region. The short motif at 59–62 (ETTQ) is the Polymerase core binding element. The segment at 140-187 (MGSLSDLQREAIQLAYYEGLTYVQVSERLSANLATIKSRMRGGIRGLK) is sigma-70 factor domain-4. Residues 161–180 (YVQVSERLSANLATIKSRMR) constitute a DNA-binding region (H-T-H motif).

This sequence belongs to the sigma-70 factor family. ECF subfamily. Interacts transiently with the RNA polymerase catalytic core formed by RpoA, RpoB, RpoC and RpoZ (2 alpha, 1 beta, 1 beta' and 1 omega subunit) to form the RNA polymerase holoenzyme that can initiate transcription. Interacts (via sigma-70 factor domain 4) with anti-sigma-K factor RskA.

Sigma factors are initiation factors that promote the attachment of RNA polymerase to specific initiation sites and are then released. Extracytoplasmic function (ECF) sigma factors are held in an inactive form by an anti-sigma factor until released by regulated intramembrane proteolysis. The polypeptide is ECF RNA polymerase sigma factor SigK (sigK) (Mycobacterium sp. (strain KMS)).